A 1029-amino-acid chain; its full sequence is Exportin-T (1029 aa).

This sequence belongs to the exportin family.

The protein localises to the nucleus. Its subcellular location is the cytoplasm. Its function is as follows. tRNA nucleus export receptor which facilitates tRNA translocation across the nuclear pore complex. Involved in pre-tRNA splicing, probably by affecting the interaction of pre-tRNA with splicing endonuclease. This Aspergillus clavatus (strain ATCC 1007 / CBS 513.65 / DSM 816 / NCTC 3887 / NRRL 1 / QM 1276 / 107) protein is Exportin-T (los1).